The primary structure comprises 480 residues: MAASAVCRAAGAGTRVLLRTRRSPALLRSSDLRGTATYAQALQSVPETQVSQLDNGLRVASEQSSQPTCTVGVWIDAGSRYESEKNNGAGYFVEHLAFKGTKNRPGNALEKEVESMGAHLNAYSTREHTAYYIKALSKDLPKAVELLADIVQNCSLEDSQIEKERDVILQELQENDTSMRDVVFNYLHATAFQGTPLAQSVEGPSENVRKLSRADLTEYLSRHYKAPRMVLAAAGGLEHRQLLDLAQKHFSGLSGTYDEDAVPTLSPCRFTGSQICHREDGLPLAHVAIAVEGPGWAHPDNVALQVANAIIGHYDCTYGGGAHLSSPLASIAATNKLCQSFQTFNICYADTGLLGAHFVCDHMSIDDMMFVLQGQWMRLCTSATESEVLRGKNLLRNALVSHLDGTTPVCEDIGRSLLTYGRRIPLAEWESRIAEVDARVVREVCSKYFYDQCPAVAGFGPIEQLPDYNRIRSGMFWLRF.

The transit peptide at 1–34 (MAASAVCRAAGAGTRVLLRTRRSPALLRSSDLRG) directs the protein to the mitochondrion. 2 positions are modified to N6-acetyllysine: Lys-111 and Lys-138. N6-acetyllysine; alternate is present on Lys-163. The residue at position 163 (Lys-163) is an N6-succinyllysine; alternate. The residue at position 212 (Ser-212) is a Phosphoserine. Lys-248 is modified (N6-acetyllysine).

It belongs to the peptidase M16 family. UQCRC1/QCR1 subfamily. In terms of assembly, component of the ubiquinol-cytochrome c oxidoreductase (cytochrome b-c1 complex, complex III, CIII), a multisubunit enzyme composed of 11 subunits. The complex is composed of 3 respiratory subunits cytochrome b, cytochrome c1 and Rieske protein UQCRFS1, 2 core protein subunits UQCRC1/QCR1 and UQCRC2/QCR2, and 6 low-molecular weight protein subunits UQCRH/QCR6, UQCRB/QCR7, UQCRQ/QCR8, UQCR10/QCR9, UQCR11/QCR10 and subunit 9, the cleavage product of Rieske protein UQCRFS1. The complex exists as an obligatory dimer and forms supercomplexes (SCs) in the inner mitochondrial membrane with NADH-ubiquinone oxidoreductase (complex I, CI) and cytochrome c oxidase (complex IV, CIV), resulting in different assemblies (supercomplex SCI(1)III(2)IV(1) and megacomplex MCI(2)III(2)IV(2)). Interacts with UQCC6. Interacts with STMP1.

Its subcellular location is the mitochondrion inner membrane. Its function is as follows. Component of the ubiquinol-cytochrome c oxidoreductase, a multisubunit transmembrane complex that is part of the mitochondrial electron transport chain which drives oxidative phosphorylation. The respiratory chain contains 3 multisubunit complexes succinate dehydrogenase (complex II, CII), ubiquinol-cytochrome c oxidoreductase (cytochrome b-c1 complex, complex III, CIII) and cytochrome c oxidase (complex IV, CIV), that cooperate to transfer electrons derived from NADH and succinate to molecular oxygen, creating an electrochemical gradient over the inner membrane that drives transmembrane transport and the ATP synthase. The cytochrome b-c1 complex catalyzes electron transfer from ubiquinol to cytochrome c, linking this redox reaction to translocation of protons across the mitochondrial inner membrane, with protons being carried across the membrane as hydrogens on the quinol. In the process called Q cycle, 2 protons are consumed from the matrix, 4 protons are released into the intermembrane space and 2 electrons are passed to cytochrome c. The 2 core subunits UQCRC1/QCR1 and UQCRC2/QCR2 are homologous to the 2 mitochondrial-processing peptidase (MPP) subunits beta-MPP and alpha-MPP respectively, and they seem to have preserved their MPP processing properties. May be involved in the in situ processing of UQCRFS1 into the mature Rieske protein and its mitochondrial targeting sequence (MTS)/subunit 9 when incorporated into complex III. Seems to play an important role in the maintenance of proper mitochondrial function in nigral dopaminergic neurons. In Bos taurus (Bovine), this protein is Cytochrome b-c1 complex subunit 1, mitochondrial (UQCRC1).